A 235-amino-acid polypeptide reads, in one-letter code: FITMNFVVEAASSNANQAITSENSIKPKGKLQPQMEKYTLTYFNGRGRAEVIRLLFALANVSYEDNRITRDEWKYLKPRTPFGHVPMLNVSGNVLGESHAIELLLGGRFGLLGTNDWEEAKIMAVVLNIDELFQKLIPWTHEKNTTKKAELFRNLSESDVMPFLGRYEKFLKESTTGHIVGNKVSVADLTVFNMLMTLDDEVKLEEYPQLASFVNKIGQMPGIKEWIKKRPKTYF.

The GST N-terminal domain maps to 36-113; the sequence is EKYTLTYFNG…LLGGRFGLLG (78 aa). Glutathione contacts are provided by residues Tyr-42, Trp-73, Lys-77, Val-85, and 97–98; that span reads ES. The GST C-terminal domain maps to 115 to 235; it reads NDWEEAKIMA…WIKKRPKTYF (121 aa).

The protein belongs to the GST superfamily. Homodimer.

The catalysed reaction is RX + glutathione = an S-substituted glutathione + a halide anion + H(+). This is Glutathione S-transferase 1 (GST1) from Onchocerca volvulus.